A 146-amino-acid polypeptide reads, in one-letter code: MAKEFSRTRRIGQQLQQELAVVLQRDMKDPRIGFVTVNDVDVSRDLSYAKVFVTFFEEDKEVVQEKLNALIAAAPYIRTLVAGRMKLRVMPEIRFVYDSSLVEGMRMSNLVSQVINSDKAKQQQFGSVDDVTENDIDEADDTEGKA.

The disordered stretch occupies residues 122 to 146 (QQQFGSVDDVTENDIDEADDTEGKA). The segment covering 130–146 (DVTENDIDEADDTEGKA) has biased composition (acidic residues).

It belongs to the RbfA family. As to quaternary structure, monomer. Binds 30S ribosomal subunits, but not 50S ribosomal subunits or 70S ribosomes.

The protein localises to the cytoplasm. Its function is as follows. One of several proteins that assist in the late maturation steps of the functional core of the 30S ribosomal subunit. Associates with free 30S ribosomal subunits (but not with 30S subunits that are part of 70S ribosomes or polysomes). Required for efficient processing of 16S rRNA. May interact with the 5'-terminal helix region of 16S rRNA. The protein is Ribosome-binding factor A of Shewanella sp. (strain MR-7).